Reading from the N-terminus, the 78-residue chain is Probable [Fe-S]-dependent transcriptional repressor (78 aa).

Residues cysteine 56, cysteine 61, cysteine 64, and cysteine 70 each coordinate iron-sulfur cluster.

This sequence belongs to the FeoC family.

Its function is as follows. May function as a transcriptional regulator that controls feoABC expression. This is Probable [Fe-S]-dependent transcriptional repressor from Escherichia coli O127:H6 (strain E2348/69 / EPEC).